The chain runs to 289 residues: Acetyl-coenzyme A carboxylase carboxyl transferase subunit beta (289 aa).

Residues 24–289 enclose the CoA carboxyltransferase N-terminal domain; sequence LWIKCPESGE…NSPRRAPIPA (266 aa).

This sequence belongs to the AccD/PCCB family. As to quaternary structure, acetyl-CoA carboxylase is a heterohexamer composed of biotin carboxyl carrier protein (AccB), biotin carboxylase (AccC) and two subunits each of ACCase subunit alpha (AccA) and ACCase subunit beta (AccD).

It localises to the cytoplasm. The catalysed reaction is N(6)-carboxybiotinyl-L-lysyl-[protein] + acetyl-CoA = N(6)-biotinyl-L-lysyl-[protein] + malonyl-CoA. It functions in the pathway lipid metabolism; malonyl-CoA biosynthesis; malonyl-CoA from acetyl-CoA: step 1/1. Component of the acetyl coenzyme A carboxylase (ACC) complex. Biotin carboxylase (BC) catalyzes the carboxylation of biotin on its carrier protein (BCCP) and then the CO(2) group is transferred by the transcarboxylase to acetyl-CoA to form malonyl-CoA. The protein is Acetyl-coenzyme A carboxylase carboxyl transferase subunit beta of Beijerinckia indica subsp. indica (strain ATCC 9039 / DSM 1715 / NCIMB 8712).